The primary structure comprises 406 residues: Phosphorylase b kinase gamma catalytic chain, liver/testis isoform (406 aa).

The Protein kinase domain occupies 24-291 (YDPKDIIGRG…AEQALQHPFF (268 aa)). Residues 30-38 (IGRGVSSVV) and lysine 53 each bind ATP. Aspartate 153 functions as the Proton acceptor in the catalytic mechanism. Residues 306–330 (QRFRVAVWTILAAGRVALSSHRLRP) form a calmodulin-binding (domain-N) region. Positions 346–370 (VRRLIDNCAFRLYGHWVKKGEQQNR) are calmodulin-binding (domain-C).

Belongs to the protein kinase superfamily. CAMK Ser/Thr protein kinase family. Hexadecamer of 4 heterotetramers, each composed of alpha, beta, gamma, and delta subunits. Alpha (PHKA1 or PHKA2) and beta (PHKB) are regulatory subunits, gamma (PHKG1 or PHKG2) is the catalytic subunit, and delta is calmodulin.

The enzyme catalyses 2 ATP + phosphorylase b = 2 ADP + phosphorylase a.. In terms of biological role, catalytic subunit of the phosphorylase b kinase (PHK), which mediates the neural and hormonal regulation of glycogen breakdown (glycogenolysis) by phosphorylating and thereby activating glycogen phosphorylase. May regulate glycogeneolysis in the testis. In vitro, phosphorylates PYGM. The polypeptide is Phosphorylase b kinase gamma catalytic chain, liver/testis isoform (Phkg2) (Rattus norvegicus (Rat)).